A 559-amino-acid polypeptide reads, in one-letter code: Urocanate hydratase (559 aa).

Residues 49–50 (GG), Gln127, 173–175 (GMG), Asp193, Arg198, 239–240 (NA), 260–264 (QTSAH), 270–271 (YL), and Tyr319 each bind NAD(+). Cys407 is an active-site residue. Gly489 provides a ligand contact to NAD(+).

The protein belongs to the urocanase family. NAD(+) is required as a cofactor.

The protein localises to the cytoplasm. It catalyses the reaction 4-imidazolone-5-propanoate = trans-urocanate + H2O. The protein operates within amino-acid degradation; L-histidine degradation into L-glutamate; N-formimidoyl-L-glutamate from L-histidine: step 2/3. Functionally, catalyzes the conversion of urocanate to 4-imidazolone-5-propionate. The chain is Urocanate hydratase from Shouchella clausii (strain KSM-K16) (Alkalihalobacillus clausii).